The primary structure comprises 214 residues: Large ribosomal subunit protein bL25 (214 aa).

Residues 179-214 (VPPTQGPSEAEIEEVEAGDADTPEPEVVGEKEEDEE) form a disordered region. Residues 188–202 (AEIEEVEAGDADTPE) show a composition bias toward acidic residues.

This sequence belongs to the bacterial ribosomal protein bL25 family. CTC subfamily. Part of the 50S ribosomal subunit; part of the 5S rRNA/L5/L18/L25 subcomplex. Contacts the 5S rRNA. Binds to the 5S rRNA independently of L5 and L18.

This is one of the proteins that binds to the 5S RNA in the ribosome where it forms part of the central protuberance. The protein is Large ribosomal subunit protein bL25 of Staphylococcus carnosus (strain TM300).